The sequence spans 307 residues: Thymidylate synthase (307 aa).

Position 44 (Arg44) interacts with dUMP. Ser108 is modified (phosphoserine). Residues 169–170 (RR), 189–190 (CH), 209–212 (RSGD), Asn220, and 250–252 (HIY) each bind dUMP. Cys189 serves as the catalytic Nucleophile. Asp212 lines the (6R)-5,10-methylene-5,6,7,8-tetrahydrofolate pocket. Residues Lys286 and Lys302 each participate in a glycyl lysine isopeptide (Lys-Gly) (interchain with G-Cter in SUMO2) cross-link. Ala306 contacts (6R)-5,10-methylene-5,6,7,8-tetrahydrofolate.

This sequence belongs to the thymidylate synthase family. As to quaternary structure, homodimer.

The protein localises to the nucleus. It localises to the cytoplasm. It is found in the mitochondrion. Its subcellular location is the mitochondrion matrix. The protein resides in the mitochondrion inner membrane. The enzyme catalyses dUMP + (6R)-5,10-methylene-5,6,7,8-tetrahydrofolate = 7,8-dihydrofolate + dTMP. The protein operates within pyrimidine metabolism; dTTP biosynthesis. Catalyzes the reductive methylation of 2'-deoxyuridine 5'-monophosphate (dUMP) to thymidine 5'-monophosphate (dTMP), using the cosubstrate, 5,10- methylenetetrahydrofolate (CH2H4folate) as a 1-carbon donor and reductant and contributes to the de novo mitochondrial thymidylate biosynthesis pathway. The protein is Thymidylate synthase (Tyms) of Mus musculus (Mouse).